The primary structure comprises 208 residues: CASP-like protein 4A4 (208 aa).

At 1–53 (MKELKDHVVVITYGPSSEASVTASPVSQQTPSLFAYSVTPSASRFSSRRASVH) the chain is on the cytoplasmic side. Residues 54 to 74 (VIGLVLRFITMVLCFVSALSL) form a helical membrane-spanning segment. At 75–92 (AVNVQRPSKRHLTQNSSS) the chain is on the extracellular side. Asn89 is a glycosylation site (N-linked (GlcNAc...) asparagine). The chain crosses the membrane as a helical span at residues 93–113 (FASYPELLYCFGVAVIGFVYT). Residues 114 to 141 (SLQTFKGVCDITHRGVLISEPLSDYISF) are Cytoplasmic-facing. The chain crosses the membrane as a helical span at residues 142 to 162 (IFDQVICYLLVSSSSVAIAWI). The Extracellular portion of the chain corresponds to 163-176 (QHINEDAIKTLRNN). The N-linked (GlcNAc...) asparagine glycan is linked to Asn175. The helical transmembrane segment at 177–197 (SIVSVSMSFSAFLVLTLSGLL) threads the bilayer. Over 198–208 (SGYKLCKRFMW) the chain is Cytoplasmic.

It belongs to the Casparian strip membrane proteins (CASP) family. Homodimer and heterodimers.

Its subcellular location is the cell membrane. This chain is CASP-like protein 4A4, found in Arabidopsis thaliana (Mouse-ear cress).